Here is a 554-residue protein sequence, read N- to C-terminus: Probable ATP-binding cassette sub-family F member 3 homolog (554 aa).

ABC transporter domains lie at 89–285 (GDLH…ASAR) and 351–554 (IEFV…GLGV). ATP-binding positions include 122–129 (GRNGIGKT) and 383–390 (GANGQGKS).

Belongs to the ABC transporter superfamily. ABCF family. EF3 subfamily.

The protein is Probable ATP-binding cassette sub-family F member 3 homolog of Encephalitozoon cuniculi (strain GB-M1) (Microsporidian parasite).